The following is a 394-amino-acid chain: UDP-glucose 6-dehydrogenase (394 aa).

Residues 2–19 (KIAIAGSGYVGLSLAVLL), valine 11, aspartate 29, lysine 34, threonine 83, threonine 118, and glutamate 145 each bind NAD(+). Substrate contacts are provided by residues 141–145 (EFLRE), lysine 203, asparagine 207, 248–252 (YNNPS), and glycine 256. Tyrosine 258 contacts NAD(+). Catalysis depends on cysteine 259, which acts as the Nucleophile. Position 262 (lysine 262) interacts with NAD(+). Substrate is bound at residue lysine 313. Arginine 320 is an NAD(+) binding site.

The protein belongs to the UDP-glucose/GDP-mannose dehydrogenase family.

It catalyses the reaction UDP-alpha-D-glucose + 2 NAD(+) + H2O = UDP-alpha-D-glucuronate + 2 NADH + 3 H(+). The protein operates within nucleotide-sugar biosynthesis; UDP-alpha-D-glucuronate biosynthesis; UDP-alpha-D-glucuronate from UDP-alpha-D-glucose: step 1/1. Functionally, catalyzes the formation of UDP-glucuronic acid which is required for capsular hyaluronic acid synthesis. Directly responsible for the transformation of some unencapsulated serotype-3 SP mutants to the encapsulated phenotype. The protein is UDP-glucose 6-dehydrogenase (cap3A) of Streptococcus pneumoniae.